A 492-amino-acid polypeptide reads, in one-letter code: WD repeat-containing protein JIP5 (492 aa).

5 WD repeats span residues 127-166, 178-217, 236-274, 276-317, and 365-405; these read RHKG…VVKK, KKND…LSNS, RSAY…ILIS, DQED…LEDQ, and RNHN…VEEN. Composition is skewed to acidic residues over residues 404–414 and 422–433; these read ENASVESDSDE and DLSDDTSSDDET. The disordered stretch occupies residues 404 to 472; that stretch reads ENASVESDSD…SKSVKKRKIM (69 aa). A compositionally biased stretch (basic and acidic residues) spans 449-462; the sequence is KDLKEDHQEEKESN.

Belongs to the WD repeat WDR55 family. In terms of assembly, interacts with BRE1, BUD27 and GIS1.

The protein localises to the nucleus. It localises to the nucleolus. In Saccharomyces cerevisiae (strain YJM789) (Baker's yeast), this protein is WD repeat-containing protein JIP5 (JIP5).